Consider the following 105-residue polypeptide: Large ribosomal subunit protein bL21c (105 aa).

It belongs to the bacterial ribosomal protein bL21 family. In terms of assembly, part of the 50S ribosomal subunit.

It is found in the plastid. The protein resides in the chloroplast. Its function is as follows. This protein binds to 23S rRNA. This is Large ribosomal subunit protein bL21c from Thalassiosira pseudonana (Marine diatom).